A 1687-amino-acid polypeptide reads, in one-letter code: Protein TOPAZ1 (1687 aa).

Disordered regions lie at residues 1–131 (MRRP…QPGF), 319–339 (EESS…KADE), 596–632 (LSRS…GNLT), and 880–916 (TSEV…SDDL). Positions 31–41 (GAAGGCGPEAG) are enriched in gly residues. Residues 80 to 113 (RRVEGRRGQVSPSDRRGLEAAKEAEFPLQTERHT) show a composition bias toward basic and acidic residues. The segment covering 598 to 622 (RSGSEVISNTTEDTQLTSDTQSLTG) has biased composition (polar residues). Residues 897–916 (QSTDSKYVETPVKKEPSDDL) show a composition bias toward basic and acidic residues.

The protein localises to the cytoplasm. Its subcellular location is the cytosol. Functionally, important for normal spermatogenesis and male fertility. Specifically required for progression to the post-meiotic stages of spermatocyte development. Seems to be necessary for normal expression levels of a number of testis-expressed gene transcripts, although its role in this process is unclear. The protein is Protein TOPAZ1 (TOPAZ1) of Macaca fascicularis (Crab-eating macaque).